Reading from the N-terminus, the 416-residue chain is NADH-quinone oxidoreductase subunit D (416 aa).

Belongs to the complex I 49 kDa subunit family. NDH-1 is composed of 14 different subunits. Subunits NuoB, C, D, E, F, and G constitute the peripheral sector of the complex.

It localises to the cell inner membrane. The enzyme catalyses a quinone + NADH + 5 H(+)(in) = a quinol + NAD(+) + 4 H(+)(out). Functionally, NDH-1 shuttles electrons from NADH, via FMN and iron-sulfur (Fe-S) centers, to quinones in the respiratory chain. The immediate electron acceptor for the enzyme in this species is believed to be ubiquinone. Couples the redox reaction to proton translocation (for every two electrons transferred, four hydrogen ions are translocated across the cytoplasmic membrane), and thus conserves the redox energy in a proton gradient. The sequence is that of NADH-quinone oxidoreductase subunit D from Gluconacetobacter diazotrophicus (strain ATCC 49037 / DSM 5601 / CCUG 37298 / CIP 103539 / LMG 7603 / PAl5).